The following is a 58-amino-acid chain: Large ribosomal subunit protein bL32 (58 aa).

Belongs to the bacterial ribosomal protein bL32 family.

The chain is Large ribosomal subunit protein bL32 from Ligilactobacillus salivarius (strain UCC118) (Lactobacillus salivarius).